The sequence spans 243 residues: Small ribosomal subunit protein uS3 (243 aa).

The 72-residue stretch at 39–110 (IRGFIQKKYA…QVRINVVEIE (72 aa)) folds into the KH type-2 domain. The disordered stretch occupies residues 215–243 (DQPLPVGASPRRKGSRRPQQFEDRSNDGK). A compositionally biased stretch (basic and acidic residues) spans 233 to 243 (QQFEDRSNDGK).

Belongs to the universal ribosomal protein uS3 family. Part of the 30S ribosomal subunit. Forms a tight complex with proteins S10 and S14.

Binds the lower part of the 30S subunit head. Binds mRNA in the 70S ribosome, positioning it for translation. This is Small ribosomal subunit protein uS3 from Prochlorococcus marinus (strain MIT 9211).